The following is a 373-amino-acid chain: Glutamate 5-kinase 2 (373 aa).

An ATP-binding site is contributed by K11. Residues S51, D138, and N150 each contribute to the substrate site. Residues 170 to 171 (SD) and 212 to 218 (TGGMKSK) each bind ATP. The PUA domain occupies 279-355 (EGDIVVHNES…TNQETAASSQ (77 aa)).

This sequence belongs to the glutamate 5-kinase family.

The protein resides in the cytoplasm. The enzyme catalyses L-glutamate + ATP = L-glutamyl 5-phosphate + ADP. The protein operates within amino-acid biosynthesis; L-proline biosynthesis; L-glutamate 5-semialdehyde from L-glutamate: step 1/2. Functionally, catalyzes the transfer of a phosphate group to glutamate to form L-glutamate 5-phosphate. The sequence is that of Glutamate 5-kinase 2 from Bacillus licheniformis (strain ATCC 14580 / DSM 13 / JCM 2505 / CCUG 7422 / NBRC 12200 / NCIMB 9375 / NCTC 10341 / NRRL NRS-1264 / Gibson 46).